A 261-amino-acid polypeptide reads, in one-letter code: Orotidine 5'-phosphate decarboxylase (261 aa).

Residues aspartate 34, 56–58, 88–97, tyrosine 214, and arginine 232 each bind substrate; these read KTH and DRKFADIGNT. Lysine 90 functions as the Proton donor in the catalytic mechanism.

Belongs to the OMP decarboxylase family.

The catalysed reaction is orotidine 5'-phosphate + H(+) = UMP + CO2. The protein operates within pyrimidine metabolism; UMP biosynthesis via de novo pathway; UMP from orotate: step 2/2. This is Orotidine 5'-phosphate decarboxylase (URA3) from Kodamaea ohmeri (Yeast).